A 150-amino-acid chain; its full sequence is UPF0178 protein Shew_2726 (150 aa).

This sequence belongs to the UPF0178 family.

In Shewanella loihica (strain ATCC BAA-1088 / PV-4), this protein is UPF0178 protein Shew_2726.